A 72-amino-acid polypeptide reads, in one-letter code: Sec-independent protein translocase protein TatA (72 aa).

The helical transmembrane segment at 1-21 (MAGLSIWHVVIFAIVVILLFG) threads the bilayer. The segment at 47–72 (DEAASLNSPRTIDAQVKTSESTSVKS) is disordered. The span at 51 to 72 (SLNSPRTIDAQVKTSESTSVKS) shows a compositional bias: polar residues.

Belongs to the TatA/E family. As to quaternary structure, the Tat system comprises two distinct complexes: a TatABC complex, containing multiple copies of TatA, TatB and TatC subunits, and a separate TatA complex, containing only TatA subunits. Substrates initially bind to the TatABC complex, which probably triggers association of the separate TatA complex to form the active translocon.

It is found in the cell inner membrane. Its function is as follows. Part of the twin-arginine translocation (Tat) system that transports large folded proteins containing a characteristic twin-arginine motif in their signal peptide across membranes. TatA could form the protein-conducting channel of the Tat system. The protein is Sec-independent protein translocase protein TatA of Acinetobacter baumannii (strain AB307-0294).